A 329-amino-acid polypeptide reads, in one-letter code: MAALGGDGLRLLSVSRPERPPESAALGGLGPGLCCWVSVFSCLSLACSYVGSLYVWKSELPRDHPAVIKRRFTSVLVVSSLSPLCVLLWRELTGIQPGTSLLTLMGFRLEGIFPAALLPLLLTMILFLGPLMQLSMDCPCDLADGLKVVLAPRSWARCLTDMRWLRNQVIAPLTEELVFRACMLPMLAPCMGLGPAVFTCPLFFGVAHFHHIIEQLRFRQSSVGNIFLSAAFQFSYTAVFGAYTAFLFIRTGHLIGPVLCHSFCNYMGFPAVCAALEHPQRRPLLAGYALGVGLFLLLLQPLTDPKLYGSLPLCVLLERAGDSEAPLCS.

The residue at position 2 (alanine 2) is an N-acetylalanine. 3 consecutive transmembrane segments (helical) span residues 25–45 (ALGG…CLSL), 75–95 (VLVV…LTGI), and 112–132 (IFPA…GPLM). The active-site Proton donor/acceptor is the glutamate 175. Residues 186-206 (MLAPCMGLGPAVFTCPLFFGV) traverse the membrane as a helical segment. Residue histidine 208 is the Proton donor/acceptor of the active site. The next 3 membrane-spanning stretches (helical) occupy residues 229–249 (SAAF…FLFI), 254–274 (LIGP…AVCA), and 283–303 (PLLA…QPLT).

Belongs to the peptidase U48 family. Post-translationally, ubiquitinated. Undergoes 'Lys-48'- and 'Lys-63'-linked ubiquitination. 'Lys-48' ubiquitination induces its degradation. Deubiquitinated by USP17L2/USP17 that cleaves 'Lys-63'-linked ubiquitin chains. Ubiquitous.

Its subcellular location is the endoplasmic reticulum membrane. The catalysed reaction is Hydrolyzes the peptide bond -P2-(S-farnesyl or geranylgeranyl)C-P1'-P2'-P3'-COOH where P1' and P2' are amino acids with aliphatic sidechains and P3' is any C-terminal residue.. Its activity is regulated as follows. Deubiquitination by USP17L2/USP17 negatively regulates the proteolytic activity toward Ras GTPases. Its function is as follows. Protease involved in the processing of a variety of prenylated proteins containing the C-terminal CAAX motif, where C is a cysteine modified with an isoprenoid lipid, A is an aliphatic amino acid and X is any C-terminal amino acid. Proteolytically removes the C-terminal three residues of farnesylated and geranylated proteins, leaving the prenylated cysteine as the new C-terminus. Is able to process K-Ras, N-Ras, H-Ras, RAP1B and G-gamma-1. This chain is CAAX prenyl protease 2 (RCE1), found in Homo sapiens (Human).